Here is a 552-residue protein sequence, read N- to C-terminus: Putative transport protein YPTS_4123 (552 aa).

6 helical membrane passes run 1–21 (MSAIALTVSMLALVAVLGLWI), 26–46 (IYGVGLGIGGVLFGGIIVGHF), 65–85 (FGLILFVYTIGIQVGPGFFSS), 96–116 (FAILMVVVGGLVTAIIHKLFA), 119–139 (LPIILGVFSGAVTNTPALGAA), and 158–178 (MGYAMAYPFGICGILLVMWLI). 2 consecutive RCK C-terminal domains span residues 192–276 (AFDS…VVGE) and 279–361 (DVTL…IVGN). A run of 6 helical transmembrane segments spans residues 371-391 (MLPVFIGVGLGVLLGSIPLFV), 393-413 (GFPAALRLGLAGGPLVVALIL), 439-459 (IVLFLSVVGLKSGGDFINTLV), 464-484 (LAWIGYGAMITGIPLLTVGIL), 493-513 (YLTLCGMLAGSMTDPPALAFA), and 530-550 (VYPLAMFLRIMSPQILAVLFW).

Belongs to the AAE transporter (TC 2.A.81) family. YidE subfamily.

It localises to the cell membrane. The chain is Putative transport protein YPTS_4123 from Yersinia pseudotuberculosis serotype IB (strain PB1/+).